Here is a 574-residue protein sequence, read N- to C-terminus: MSSGIILLIVAIVLLVIIAYLVGVIIRKRNDSLITSLEERKQALFALPVNDEIEEVKSLHLIGQSQTSFREWNQKWVDLTVNSFADIENHIFEAENLNDTFNFIRAKHEINSVESQLNLVEEDIASIREALNILKEQEEKNSARVTHALDLYEKLQASISENEDNFGSTMPEIDKQMKNIETEFSQFVALNSSGDPVEASEVLDRAEEHTIALGQITEQIPAIVAKLEDDFPDQLDDLETGYRRLLEENYHFPEKNIEARFQEIRESIRANSSELVTLDLDRAREENTHIQERIDSLYEVFEREIAAYKVAAKNSKMLPRYLAHVKHNNEQLKDEIARLSRKYILSETESLTVKAFEKDIKEIEDSTLAVAEQFGLQEKPFSELQVTFERSIKTLTNVESGQMDVFAAVKDIEKIESQARHNLDVYVTQLHMIKRYMEKRHLPGIPQDFLSAFFTTSSQLEALMDELSRGRINIEAVSRLSEVATVAIANLEDLTYQVVQNATLTEQLLQYSNRYRSFEAGVQSSFEHALRLFEVENDYQASFDEISYALETVEPGVTDRFVNSYEKTREHIRF.

The Extracellular portion of the chain corresponds to 1–7 (MSSGIIL). Residues 8–26 (LIVAIVLLVIIAYLVGVII) form a helical membrane-spanning segment. Over 27 to 574 (RKRNDSLITS…YEKTREHIRF (548 aa)) the chain is Cytoplasmic. Coiled-coil stretches lie at residues 102 to 141 (NFIR…EEKN), 274 to 350 (ELVT…ETES), and 459 to 520 (QLEA…SFEA).

It belongs to the EzrA family.

It localises to the cell membrane. Functionally, negative regulator of FtsZ ring formation; modulates the frequency and position of FtsZ ring formation. Inhibits FtsZ ring formation at polar sites. Interacts either with FtsZ or with one of its binding partners to promote depolymerization. The sequence is that of Septation ring formation regulator EzrA from Streptococcus pyogenes serotype M4 (strain MGAS10750).